The chain runs to 83 residues: Putative beta-neurotoxin RjAa17f (83 aa).

The first 18 residues, 1–18, serve as a signal peptide directing secretion; it reads MKILIFIIASFMLIGVEC. The region spanning 19-82 is the LCN-type CS-alpha/beta domain; sequence KEGYPMGRNG…VWDFSNIKCR (64 aa). Disulfide bonds link Cys-29/Cys-81, Cys-33/Cys-55, Cys-40/Cys-62, and Cys-44/Cys-64.

This sequence belongs to the long (4 C-C) scorpion toxin superfamily. Sodium channel inhibitor family. Beta subfamily. Expressed by the venom gland.

It localises to the secreted. Beta toxins bind voltage-independently at site-4 of sodium channels (Nav) and shift the voltage of activation toward more negative potentials thereby affecting sodium channel activation and promoting spontaneous and repetitive firing. This is Putative beta-neurotoxin RjAa17f from Rhopalurus junceus (Caribbean blue scorpion).